The primary structure comprises 596 residues: Phosphomethylpyrimidine synthase 1 (596 aa).

Substrate-binding positions include Asn-228, Met-257, Tyr-286, His-322, 342 to 344 (SRG), 383 to 386 (DGLR), and Glu-422. His-426 is a binding site for Zn(2+). Position 449 (Tyr-449) interacts with substrate. His-490 serves as a coordination point for Zn(2+). [4Fe-4S] cluster contacts are provided by Cys-570, Cys-573, and Cys-578.

This sequence belongs to the ThiC family. In terms of assembly, homodimer. It depends on [4Fe-4S] cluster as a cofactor.

It carries out the reaction 5-amino-1-(5-phospho-beta-D-ribosyl)imidazole + S-adenosyl-L-methionine = 4-amino-2-methyl-5-(phosphooxymethyl)pyrimidine + CO + 5'-deoxyadenosine + formate + L-methionine + 3 H(+). It participates in cofactor biosynthesis; thiamine diphosphate biosynthesis. In terms of biological role, catalyzes the synthesis of the hydroxymethylpyrimidine phosphate (HMP-P) moiety of thiamine from aminoimidazole ribotide (AIR) in a radical S-adenosyl-L-methionine (SAM)-dependent reaction. The protein is Phosphomethylpyrimidine synthase 1 of Syntrophotalea carbinolica (strain DSM 2380 / NBRC 103641 / GraBd1) (Pelobacter carbinolicus).